A 144-amino-acid chain; its full sequence is Putative pre-16S rRNA nuclease (144 aa).

Belongs to the YqgF nuclease family.

The protein localises to the cytoplasm. Could be a nuclease involved in processing of the 5'-end of pre-16S rRNA. The protein is Putative pre-16S rRNA nuclease of Oenococcus oeni (strain ATCC BAA-331 / PSU-1).